The sequence spans 347 residues: Histidinol-phosphate aminotransferase (347 aa).

Lys-209 carries the N6-(pyridoxal phosphate)lysine modification.

The protein belongs to the class-II pyridoxal-phosphate-dependent aminotransferase family. Histidinol-phosphate aminotransferase subfamily. Homodimer. Requires pyridoxal 5'-phosphate as cofactor.

The enzyme catalyses L-histidinol phosphate + 2-oxoglutarate = 3-(imidazol-4-yl)-2-oxopropyl phosphate + L-glutamate. It participates in amino-acid biosynthesis; L-histidine biosynthesis; L-histidine from 5-phospho-alpha-D-ribose 1-diphosphate: step 7/9. The polypeptide is Histidinol-phosphate aminotransferase (Geotalea daltonii (strain DSM 22248 / JCM 15807 / FRC-32) (Geobacter daltonii)).